The sequence spans 347 residues: DNA primase small subunit PriS (347 aa).

Active-site residues include D95 and D97. Residues C106, H108, C114, and C117 each contribute to the Zn(2+) site. The short motif at 106-117 (CNHEPGTVCPIC) is the Zinc knuckle motif element. Residue D280 is part of the active site.

Belongs to the eukaryotic-type primase small subunit family. As to quaternary structure, heterodimer of a small subunit (PriS) and a large subunit (PriL). Both participate in formation of the active center, but the ATP-binding site is exclusively located on the small subunit. It depends on Mg(2+) as a cofactor. Mn(2+) serves as cofactor.

In terms of biological role, catalytic subunit of DNA primase, an RNA polymerase that catalyzes the synthesis of short RNA molecules used as primers for DNA polymerase during DNA replication. The small subunit contains the primase catalytic core and has DNA synthesis activity on its own. Binding to the large subunit stabilizes and modulates the activity, increasing the rate of DNA synthesis while decreasing the length of the DNA fragments, and conferring RNA synthesis capability. The DNA polymerase activity may enable DNA primase to also catalyze primer extension after primer synthesis. May also play a role in DNA repair. The polypeptide is DNA primase small subunit PriS (Pyrococcus furiosus (strain ATCC 43587 / DSM 3638 / JCM 8422 / Vc1)).